Reading from the N-terminus, the 708-residue chain is Capsid scaffolding protein (708 aa).

Catalysis depends on charge relay system residues His63, Ser132, and His157. Disordered regions lie at residues 270–339, 455–565, and 593–620; these read SAER…MSHP, HPSY…QQQR, and ALPS…GGGE. A compositionally biased stretch (low complexity) spans 284 to 293; sequence PAAGARVPSS. Positions 294-311 are enriched in pro residues; that stretch reads SPSPPVEPPSPVQPPALP. A compositionally biased stretch (low complexity) spans 326-339; it reads SPSEPAEAASMSHP. Residues 333 to 352 form an interaction with pAP region; the sequence is AASMSHPLSAAVPAATAPPG. Over residues 498 to 513 the composition is skewed to basic residues; sequence KQHRHGGSGGHNKRRK. 2 short sequence motifs (nuclear localization signal) span residues 510-515 and 537-543; these read KRRKET and RARKRLK. Positions 593-615 are enriched in low complexity; that stretch reads ALPSAASSSPTTTTVCTPTSELT. An interaction with major capsid protein region spans residues 688–708; sequence PPKDMVDLNRRIFVAALNKLE.

It belongs to the herpesviridae capsid scaffolding protein family. In terms of assembly, homomultimer. Interacts with major capsid protein. As to quaternary structure, exists in a monomer-dimer equilibrium with the dimer being the active species. In terms of processing, capsid scaffolding protein is cleaved by assemblin after formation of the spherical procapsid. As a result, the capsid obtains its mature, icosahedral shape. Cleavages occur at two or more sites: release (R-site) and maturation (M-site).

Its subcellular location is the host cytoplasm. The protein localises to the host nucleus. The enzyme catalyses Cleaves -Ala-|-Ser- and -Ala-|-Ala- bonds in the scaffold protein.. Functionally, acts as a scaffold protein by binding major capsid protein in the cytoplasm, inducing the nuclear localization of both proteins. Multimerizes in the nucleus such as major capsid protein forms the icosahedral T=16 capsid. Autocatalytic cleavage releases the assembly protein, and subsequently abolishes interaction with major capsid protein. Cleavages products are evicted from the capsid before or during DNA packaging. In terms of biological role, protease that plays an essential role in virion assembly within the nucleus. Catalyzes the cleavage of the assembly protein after formation of the spherical procapsid. By that cleavage, the capsid matures and gains its icosahedral shape. The cleavage sites seem to include -Ala-Ser-, -Ala-Ala-, as well as Ala-Thr bonds. Assemblin and cleavages products are evicted from the capsid before or during DNA packaging. Its function is as follows. Plays a major role in capsid assembly. Acts as a scaffold protein by binding major capsid protein. Multimerizes in the nucleus such as major capsid protein forms the icosahedral T=16 capsid. Cleaved by assemblin after capsid completion. The cleavages products are evicted from the capsid before or during DNA packaging. The chain is Capsid scaffolding protein (UL80) from Homo sapiens (Human).